We begin with the raw amino-acid sequence, 81 residues long: Trefoil factor 3 (81 aa).

A signal peptide spans 1-23 (MEARTFWLLVVAVLALGSSSSTG). The 44-residue stretch at 31–74 (NQCAVPAKDRVDCGYPEVTPEQCNNRGCCFDSSIHGVPWCFKPL) folds into the P-type domain. Intrachain disulfides connect Cys33-Cys59, Cys43-Cys58, and Cys53-Cys70.

In terms of assembly, monomer. Homodimer; disulfide-linked.

It localises to the secreted. The protein localises to the extracellular space. It is found in the extracellular matrix. Its subcellular location is the cytoplasm. Functionally, involved in the maintenance and repair of the intestinal mucosa. Promotes the mobility of epithelial cells in healing processes (motogen). This is Trefoil factor 3 (TFF3) from Bos taurus (Bovine).